An 86-amino-acid chain; its full sequence is Putative membrane protein insertion efficiency factor (86 aa).

Belongs to the UPF0161 family.

The protein resides in the cell inner membrane. Its function is as follows. Could be involved in insertion of integral membrane proteins into the membrane. The sequence is that of Putative membrane protein insertion efficiency factor from Histophilus somni (strain 129Pt) (Haemophilus somnus).